The following is a 734-amino-acid chain: Photosystem I P700 chlorophyll a apoprotein A2 (734 aa).

8 helical membrane passes run 46–69, 135–158, 175–199, 273–291, 330–353, 369–395, 417–439, and 517–535; these read IFAS…FHVA, LYTG…LHLQ, LNHH…HVAI, IAHH…GHMY, IHFQ…QHMY, AALY…IFFI, AIIS…LYVH, and FLVH…LILV. [4Fe-4S] cluster-binding residues include Cys559 and Cys568. Transmembrane regions (helical) follow at residues 575-596 and 643-665; these read AFYL…YWHW and LSVW…MFLI. Residues His654, Met662, and Tyr670 each coordinate chlorophyll a. Trp671 contributes to the phylloquinone binding site. A helical membrane pass occupies residues 707-727; the sequence is LVGLAHFSVGYIFTYAAFLIA.

This sequence belongs to the PsaA/PsaB family. In terms of assembly, the PsaA/B heterodimer binds the P700 chlorophyll special pair and subsequent electron acceptors. PSI consists of a core antenna complex that captures photons, and an electron transfer chain that converts photonic excitation into a charge separation. The eukaryotic PSI reaction center is composed of at least 11 subunits. P700 is a chlorophyll a/chlorophyll a' dimer, A0 is one or more chlorophyll a, A1 is one or both phylloquinones and FX is a shared 4Fe-4S iron-sulfur center. serves as cofactor.

The protein resides in the plastid. It localises to the chloroplast thylakoid membrane. It carries out the reaction reduced [plastocyanin] + hnu + oxidized [2Fe-2S]-[ferredoxin] = oxidized [plastocyanin] + reduced [2Fe-2S]-[ferredoxin]. PsaA and PsaB bind P700, the primary electron donor of photosystem I (PSI), as well as the electron acceptors A0, A1 and FX. PSI is a plastocyanin-ferredoxin oxidoreductase, converting photonic excitation into a charge separation, which transfers an electron from the donor P700 chlorophyll pair to the spectroscopically characterized acceptors A0, A1, FX, FA and FB in turn. Oxidized P700 is reduced on the lumenal side of the thylakoid membrane by plastocyanin. This chain is Photosystem I P700 chlorophyll a apoprotein A2, found in Nymphaea alba (White water-lily).